The following is a 30-amino-acid chain: Photosystem I reaction center subunit XII (30 aa).

A helical membrane pass occupies residues 6 to 26 (VFTILAIALVPAVMALLLGSA).

This sequence belongs to the PsaM family.

It localises to the cellular thylakoid membrane. This is Photosystem I reaction center subunit XII from Synechococcus sp. (strain JA-2-3B'a(2-13)) (Cyanobacteria bacterium Yellowstone B-Prime).